An 89-amino-acid polypeptide reads, in one-letter code: Small ribosomal subunit protein uS15 (89 aa).

The protein belongs to the universal ribosomal protein uS15 family. As to quaternary structure, part of the 30S ribosomal subunit. Forms a bridge to the 50S subunit in the 70S ribosome, contacting the 23S rRNA.

Its function is as follows. One of the primary rRNA binding proteins, it binds directly to 16S rRNA where it helps nucleate assembly of the platform of the 30S subunit by binding and bridging several RNA helices of the 16S rRNA. In terms of biological role, forms an intersubunit bridge (bridge B4) with the 23S rRNA of the 50S subunit in the ribosome. In Psychromonas ingrahamii (strain DSM 17664 / CCUG 51855 / 37), this protein is Small ribosomal subunit protein uS15.